The sequence spans 295 residues: NAD kinase (295 aa).

Residue Asp72 is the Proton acceptor of the active site. Residues 72-73 (DG), 146-147 (ND), Arg157, Lys174, Asp176, 187-192 (TAYALS), and Gln247 contribute to the NAD(+) site.

The protein belongs to the NAD kinase family. Requires a divalent metal cation as cofactor.

The protein resides in the cytoplasm. It catalyses the reaction NAD(+) + ATP = ADP + NADP(+) + H(+). In terms of biological role, involved in the regulation of the intracellular balance of NAD and NADP, and is a key enzyme in the biosynthesis of NADP. Catalyzes specifically the phosphorylation on 2'-hydroxyl of the adenosine moiety of NAD to yield NADP. This chain is NAD kinase, found in Azotobacter vinelandii (strain DJ / ATCC BAA-1303).